The chain runs to 273 residues: HMP-PP phosphatase (273 aa).

D8 acts as the Nucleophile in catalysis. Positions 8, 10, and 212 each coordinate Mg(2+).

Belongs to the HAD-like hydrolase superfamily. Cof family. The cofactor is Mg(2+).

The enzyme catalyses 4-amino-2-methyl-5-(diphosphooxymethyl)pyrimidine + H2O = 4-amino-2-methyl-5-(phosphooxymethyl)pyrimidine + phosphate + H(+). In terms of biological role, catalyzes the hydrolysis of 4-amino-2-methyl-5-hydroxymethylpyrimidine pyrophosphate (HMP-PP) to 4-amino-2-methyl-5-hydroxymethylpyrimidine phosphate (HMP-P). The chain is HMP-PP phosphatase from Yersinia pestis bv. Antiqua (strain Antiqua).